A 462-amino-acid chain; its full sequence is Anthranilate synthase component 1 (462 aa).

L-tryptophan contacts are provided by residues serine 46 and 243 to 245 (PHM). 278–279 (GT) provides a ligand contact to chorismate. Glutamate 305 provides a ligand contact to Mg(2+). Residues tyrosine 394, arginine 414, 428-430 (SGG), and glycine 430 each bind chorismate. A Mg(2+)-binding site is contributed by glutamate 444.

It belongs to the anthranilate synthase component I family. As to quaternary structure, heterotetramer consisting of two non-identical subunits: a beta subunit (TrpG) and a large alpha subunit (TrpE). The cofactor is Mg(2+).

The enzyme catalyses chorismate + L-glutamine = anthranilate + pyruvate + L-glutamate + H(+). The protein operates within amino-acid biosynthesis; L-tryptophan biosynthesis; L-tryptophan from chorismate: step 1/5. With respect to regulation, feedback inhibited by tryptophan. Part of a heterotetrameric complex that catalyzes the two-step biosynthesis of anthranilate, an intermediate in the biosynthesis of L-tryptophan. In the first step, the glutamine-binding beta subunit (TrpG) of anthranilate synthase (AS) provides the glutamine amidotransferase activity which generates ammonia as a substrate that, along with chorismate, is used in the second step, catalyzed by the large alpha subunit of AS (TrpE) to produce anthranilate. In the absence of TrpG, TrpE can synthesize anthranilate directly from chorismate and high concentrations of ammonia. This is Anthranilate synthase component 1 (trpE) from Leptospira biflexa.